A 383-amino-acid chain; its full sequence is Transposase InsI for insertion sequence element IS30A (383 aa).

Residues 213–379 (VNGTPIHERS…TPKEIIERGV (167 aa)) enclose the Integrase catalytic domain.

This sequence belongs to the transposase IS30 family.

Required for the transposition of the insertion element. The protein is Transposase InsI for insertion sequence element IS30A (insI1) of Escherichia coli (strain K12).